A 500-amino-acid polypeptide reads, in one-letter code: Lariat debranching enzyme (500 aa).

The interval 1 to 25 is disordered; sequence MSSKNPVDEQPCCGSHEGSHQDPAP. Positions 48, 50, 79, and 124 each coordinate a divalent metal cation. The lariat recognition loop stretch occupies residues 164–194; sequence SGIFSQGDFQFSHYERPSFSERDVKSAYHVR. The a divalent metal cation site is built by His-222, His-274, and His-276. Residues 453-500 are disordered; that stretch reads DDANAKPNQDDVDFGDEDFVIDRGHTSDEPEAKKSRLDEDKFEAVPSE. Over residues 462-471 the composition is skewed to acidic residues; sequence DDVDFGDEDF. The segment covering 472–500 has biased composition (basic and acidic residues); that stretch reads VIDRGHTSDEPEAKKSRLDEDKFEAVPSE.

This sequence belongs to the lariat debranching enzyme family. The cofactor is Fe(2+). Zn(2+) is required as a cofactor. Requires Mn(2+) as cofactor.

The protein localises to the nucleus. Its activity is regulated as follows. Active in presence of diverse metals including Fe(2+), Zn(2+), Mn(2+). Binds two metal cations in two adjacent alpha and beta metal-binding pockets. Its function is as follows. Cleaves the 2'-5' phosphodiester linkage at the branch point of lariat intron pre-mRNAs after splicing and converts them into linear molecules that are subsequently degraded. It thereby facilitates ribonucleotide turnover. The sequence is that of Lariat debranching enzyme from Caenorhabditis elegans.